A 147-amino-acid polypeptide reads, in one-letter code: Deoxyuridine 5'-triphosphate nucleotidohydrolase (147 aa).

Substrate-binding positions include 63–65 (RSG), Asn76, and 80–82 (TID).

This sequence belongs to the dUTPase family. It depends on Mg(2+) as a cofactor.

It catalyses the reaction dUTP + H2O = dUMP + diphosphate + H(+). Its pathway is pyrimidine metabolism; dUMP biosynthesis; dUMP from dCTP (dUTP route): step 2/2. In terms of biological role, this enzyme is involved in nucleotide metabolism: it produces dUMP, the immediate precursor of thymidine nucleotides and it decreases the intracellular concentration of dUTP so that uracil cannot be incorporated into DNA. The chain is Deoxyuridine 5'-triphosphate nucleotidohydrolase from Chlamydia caviae (strain ATCC VR-813 / DSM 19441 / 03DC25 / GPIC) (Chlamydophila caviae).